The following is a 1441-amino-acid chain: Envelopment polyprotein (1441 aa).

The N-terminal stretch at 1 to 13 (MICILVLITVAAA) is a signal peptide. At 14-200 (SPVYQRCFQD…GSIANSICQN (187 aa)) the chain is on the lumenal side. The N-linked (GlcNAc...) asparagine; by host glycan is linked to asparagine 57. At 201 to 221 (IEIIILVTLTLLIFILLSILS) the chain is embedded in the membrane. Residues 222–305 (KTYICYLLMP…RAARVMCKSK (84 aa)) are Cytoplasmic-facing. A membrane pass occupies residues 306–326 (GPASILSIITAVLVLTFVTPI). The Lumenal segment spans residues 327 to 361 (NSMVLGESKETFELEDLPDDMLEMASRINSYYLTC). The hydrophobic stretch at 362–382 (ILNYAVSWGLVIIGLLIGLLF) threads the membrane. At 383 to 450 (KKYQHRFLNV…NCLVQYKAKW (68 aa)) the chain is on the cytoplasmic side. Positions 451-471 (MMNFLIIYIFLILIKDSAIVV) form a transmembrane segment. Residues 472-1395 (QAAGTDFTTC…EPFKNLFGSY (924 aa)) lie on the Lumenal side of the membrane. Asparagine 490 carries N-linked (GlcNAc...) asparagine; by host glycosylation. Residues 1066 to 1087 (WGCEEFGCLAVSDGCVFGSCQD) are fusion peptide. A glycan (N-linked (GlcNAc...) asparagine; by host) is linked at asparagine 1177. At 1396 to 1416 (IGIFYTFIISIVVLLVIIYVL) the chain is embedded in the membrane. Residues 1417-1433 (LPICFKLRDTLRKHEDA) are Cytoplasmic-facing.

It belongs to the orthobunyaviruses M polyprotein family. Glycoprotein C and Glycoprotein N interact with each other.

The protein localises to the virion membrane. Its subcellular location is the host Golgi apparatus membrane. It localises to the host endoplasmic reticulum membrane. Glycoprotein C and glycoprotein N interact with each other and are present at the surface of the virion. They are able to attach the virion to a cell receptor and to promote fusion of membranes after endocytosis of the virion. The protein is Envelopment polyprotein (GP) of Bunyavirus La Crosse (isolate Human/United States/L78/1978).